Here is a 311-residue protein sequence, read N- to C-terminus: Malate dehydrogenase (311 aa).

Residues 7–13 (GAAGGIG) and Asp-34 contribute to the NAD(+) site. Arg-81 and Arg-87 together coordinate substrate. NAD(+) is bound by residues Asn-94 and 117–119 (ITN). Residues Asn-119 and Arg-153 each contribute to the substrate site. The active-site Proton acceptor is the His-177. Met-227 is an NAD(+) binding site.

This sequence belongs to the LDH/MDH superfamily. MDH type 1 family. In terms of assembly, homodimer.

The enzyme catalyses (S)-malate + NAD(+) = oxaloacetate + NADH + H(+). Its function is as follows. Catalyzes the reversible oxidation of malate to oxaloacetate. The protein is Malate dehydrogenase of Shewanella baltica (strain OS223).